The primary structure comprises 344 residues: Heat-inducible transcription repressor HrcA (344 aa).

Belongs to the HrcA family.

Functionally, negative regulator of class I heat shock genes (grpE-dnaK-dnaJ and groELS operons). Prevents heat-shock induction of these operons. This Anoxybacillus flavithermus (strain DSM 21510 / WK1) protein is Heat-inducible transcription repressor HrcA.